Reading from the N-terminus, the 152-residue chain is MSKATGFIKEFRDFAVKGNAIDLAVGVIIGAAFGKIVDSLVKDVVMPLVNFILGGSVDFSNKFLVLSMPDGYTGPMTYADLTKAGANVLAWGNFITIIINFVLLAFVIFWMVKAIYSARRKEEAAPEAPAAPPEDVTVLREIRDLLKDKQGS.

3 helical membrane passes run 21 to 41 (IDLA…DSLV), 44 to 64 (VVMP…NKFL), and 92 to 112 (GNFI…FWMV).

This sequence belongs to the MscL family. As to quaternary structure, homopentamer.

It localises to the cell inner membrane. Functionally, channel that opens in response to stretch forces in the membrane lipid bilayer. May participate in the regulation of osmotic pressure changes within the cell. This is Large-conductance mechanosensitive channel from Bordetella bronchiseptica (strain ATCC BAA-588 / NCTC 13252 / RB50) (Alcaligenes bronchisepticus).